We begin with the raw amino-acid sequence, 481 residues long: MACRKFCGVYRRPDKRQEASVPPETNTAPAFPASTFYTPAEDAYLAPGPPETIHPSRPPSPGEAARLCQLQEILAQMHSDEDYPIVDAAGAEEEDEADDDAPDDVAYPEDYAEGRFLSMVSAAPLPGASGHPPVPGRAAPPDVRTCDTGKVGATGFTPEELDTMDREALRAISRGCKPPSTLAKLVTGLGFAIHGALIPGSEGCVFDSSHPNYPHRVIVKAGWYASTSHEARLLRRLNHPAILPLLDLHVVSGVTCLVLPKYHCDLYTYLSKRPSPLGHLQITAVSRQLLSAIDYVHCKGIIHRDIKTENIFINTPENICLGDFGAACFVRGCRSSPFHYGIAGTIDTNAPEVLAGDPYTQVIDIWSAGLVIFETAVHTASLFSAPRDPERRPCDNQIARIIRQAQVHVDEFPTHAESRLTAHYRSRAAGNNRPAWTRPAWTRYYKIHTDVEYLICKALTFDAALRPSAAELLRLPLFHPK.

The disordered stretch occupies residues 12–63 (RPDKRQEASVPPETNTAPAFPASTFYTPAEDAYLAPGPPETIHPSRPPSPGE). A compositionally biased stretch (pro residues) spans 47–61 (PGPPETIHPSRPPSP). In terms of domain architecture, Protein kinase spans 191 to 478 (FAIHGALIPG…AAELLRLPLF (288 aa)). ATP-binding positions include 197–205 (LIPGSEGCV) and lysine 220. Aspartate 305 acts as the Proton acceptor in catalysis.

The protein belongs to the protein kinase superfamily. Ser/Thr protein kinase family. In terms of assembly, interacts with host LAT; this interaction prevents LAT activation of TRAF6. Post-translationally, phosphorylated by UL13; this phosphorylation regulates subsequent phosphorylation of UL31 and UL34 by US3. Autophosphorylated.

It is found in the host cytoplasm. The protein resides in the host nucleus. It catalyses the reaction L-seryl-[protein] + ATP = O-phospho-L-seryl-[protein] + ADP + H(+). The catalysed reaction is L-threonyl-[protein] + ATP = O-phospho-L-threonyl-[protein] + ADP + H(+). Functionally, multifunctional serine/threonine kinase that plays a role in several processes including egress of virus particles from the nucleus, modulation of the actin cytoskeleton and inhibition of host immune response. Phosphorylates UL31 and UL34, two critical regulators of capsid budding from nucleus to endoplasmic reticulum, thereby facilitating virion egress. Modulates and redistributes host components of the nuclear envelope, including LMNA, emerin/EMD and the nuclear matrix protein MATR3. In turn, facilitates nuclear pore impairment and capsid release through impaired nuclear envelope. Phosphorylates envelope glycoprotein B (gB), probably to direct it to the cell surface. Promotes virus intracellular spread by restructuring host cell cytoskeleton. Blocks host apoptosis to extend cell survival and allow efficient viral replication. Promotes viral gene expression by phosphorylating host HDAC2 to reduce viral genome silencing. Strongly inhibits TCR-activated signal transduction in T-cells by reducing the ubiquitination of LAT and TRAF6, leading to a suboptimal activation of LAT. Subverts host antiviral innate immunity by inhibiting type I interferon production through hyperphosphorylation of beta-catenin/CTNNB1. In addition, phosphorylates the RNA sensor RIGI and the transcription factor IRF3 to prevent the RLR-mediated antiviral signaling pathway. Hyperphosphorylates host RELA and thereby dampens NF-kappa-B signaling. Acts as an immunoevasin partly responsible for inhibition of MR1 expression and antigen presentation in response to bacterial infection. The polypeptide is Serine/threonine-protein kinase US3 (US3) (Human herpesvirus 2 (strain HG52) (HHV-2)).